The chain runs to 315 residues: Acetyl-coenzyme A carboxylase carboxyl transferase subunit alpha (315 aa).

A CoA carboxyltransferase C-terminal domain is found at Glu-32–Glu-289.

It belongs to the AccA family. In terms of assembly, acetyl-CoA carboxylase is a heterohexamer composed of biotin carboxyl carrier protein (AccB), biotin carboxylase (AccC) and two subunits each of ACCase subunit alpha (AccA) and ACCase subunit beta (AccD).

Its subcellular location is the cytoplasm. The enzyme catalyses N(6)-carboxybiotinyl-L-lysyl-[protein] + acetyl-CoA = N(6)-biotinyl-L-lysyl-[protein] + malonyl-CoA. Its pathway is lipid metabolism; malonyl-CoA biosynthesis; malonyl-CoA from acetyl-CoA: step 1/1. Functionally, component of the acetyl coenzyme A carboxylase (ACC) complex. First, biotin carboxylase catalyzes the carboxylation of biotin on its carrier protein (BCCP) and then the CO(2) group is transferred by the carboxyltransferase to acetyl-CoA to form malonyl-CoA. This Staphylococcus carnosus (strain TM300) protein is Acetyl-coenzyme A carboxylase carboxyl transferase subunit alpha.